Here is a 452-residue protein sequence, read N- to C-terminus: Phosphoglucosamine mutase (452 aa).

S97 (phosphoserine intermediate) is an active-site residue. The Mg(2+) site is built by S97, D236, D238, and D240. S97 bears the Phosphoserine mark.

This sequence belongs to the phosphohexose mutase family. Requires Mg(2+) as cofactor. Activated by phosphorylation.

It carries out the reaction alpha-D-glucosamine 1-phosphate = D-glucosamine 6-phosphate. Functionally, catalyzes the conversion of glucosamine-6-phosphate to glucosamine-1-phosphate. This is Phosphoglucosamine mutase from Prochlorococcus marinus (strain MIT 9515).